The chain runs to 233 residues: uncharacterized protein (233 aa).

3 helical membrane passes run 78–98 (FCLI…PVMY), 113–133 (FITC…LFKL), and 188–208 (FLLI…YGTI).

It localises to the membrane. This is an uncharacterized protein from Saccharomyces cerevisiae (strain ATCC 204508 / S288c) (Baker's yeast).